We begin with the raw amino-acid sequence, 454 residues long: Protein IQ-DOMAIN 1 (454 aa).

The interval 103 to 113 (GKSKEEAAAIL) is calmodulin-binding. The IQ domain maps to 107 to 136 (EEAAAILIQSTFRGHLARRESQVMRGQERL). The disordered stretch occupies residues 272–454 (WESSEKEQNT…KGVLKAERTP (183 aa)). Over residues 280 to 328 (NTTNNDNSSVKNSTNRNSQGGETAKSSNRNKLNSSTKPNTPSASSTATR) the composition is skewed to polar residues. Residues 343 to 356 (KSSDDEAKSSERNR) are compositionally biased toward basic and acidic residues. Residues 371 to 388 (LSSSTARRSSNLIPTTKS) show a composition bias toward polar residues. The span at 397–412 (TSSRVAVTTSTTEESS) shows a compositional bias: low complexity. The short motif at 421–428 (KKRLSTSA) is the Nuclear localization signal element. The segment covering 442 to 454 (KVEKGVLKAERTP) has biased composition (basic and acidic residues).

This sequence belongs to the IQD family. In terms of assembly, binds to multiple calmodulin (CaM) in the presence of Ca(2+)(e.g. CaM1 and CaM2) and CaM-like (e.g. CML8 and CML9) proteins. Interacts with KLCR1. In terms of tissue distribution, expressed in roots, flowers, stems, siliques, inflorescence stems and whole shoots. Restricted to the vascular bundles.

It localises to the nucleus. Its subcellular location is the nucleolus. The protein localises to the cytoplasm. The protein resides in the cytoskeleton. May be involved in cooperative interactions with calmodulins or calmodulin-like proteins. Modulates expression of glucosinolate pathway genes. May associate with nucleic acids and regulate gene expression at the transcriptional or post-transcriptional level. Recruits KLCR1 and calmodulin proteins to microtubules, thus being a potential scaffold in cellular signaling and trafficking. The polypeptide is Protein IQ-DOMAIN 1 (Arabidopsis thaliana (Mouse-ear cress)).